The chain runs to 621 residues: Replication factor A protein 1 (621 aa).

An N-acetylserine modification is found at serine 2. At serine 178 the chain carries Phosphoserine; by ATM or ATR. The segment at residues 197–284 (WTIKARVSYK…PYELNLDRDT (88 aa)) is a DNA-binding region (OB). The C4-type zinc-finger motif lies at 486-508 (CSNENCNKKVLEQPDGTWRCEKC).

This sequence belongs to the replication factor A protein 1 family. Component of the heterotrimeric canonical replication protein A complex (RPA). Interacts with POB3. Post-translationally, the N-terminus is blocked.

Its subcellular location is the nucleus. Functionally, as part of the replication protein A (RPA/RP-A), a single-stranded DNA-binding heterotrimeric complex, may play an essential role in DNA replication, recombination and repair. Binds and stabilizes single-stranded DNA intermediates, preventing complementary DNA reannealing and recruiting different proteins involved in DNA metabolism. Binds to single-stranded sequences participating in DNA replication in addition to those mediating transcriptional repression (URS1) and activation (CAR1). Stimulates the activity of a cognate strand exchange protein (SEP1). It cooperates with T-AG and DNA topoisomerase I to unwind template DNA containing the simian virus 40 origin of DNA replication. The chain is Replication factor A protein 1 (RFA1) from Saccharomyces cerevisiae (strain ATCC 204508 / S288c) (Baker's yeast).